We begin with the raw amino-acid sequence, 297 residues long: MENLLSTVNAILITGPTASGKSALAVELAKRHGGAVVNADSMQVYDTLRVLTARPSEVEMQGVPHHLYGHVPAGAAYSTGAWLRDVSALLPALRAAGQLPVFVGGTGLYFKALTGGLSDMPDIPEALREELRGRLLMEGPDRLHAELAEVDPAMAAGLNRQDGQRIVRALEVVKATGRSIADFQGQSGPVVIDAAQARKIVVLPERAVLHARINGRFEKMLRERAEDEVRALLALGLPAEAPVMKAIGVSQMAAMLSGEMTRDDVLEKGAAATRQYAKRQMTWFRNQMDESWERLTL.

15 to 22 (GPTASGKS) lines the ATP pocket. A substrate-binding site is contributed by 17–22 (TASGKS). Interaction with substrate tRNA regions lie at residues 40–43 (DSMQ) and 164–168 (QRIVR).

Belongs to the IPP transferase family. Monomer. Requires Mg(2+) as cofactor.

The catalysed reaction is adenosine(37) in tRNA + dimethylallyl diphosphate = N(6)-dimethylallyladenosine(37) in tRNA + diphosphate. Functionally, catalyzes the transfer of a dimethylallyl group onto the adenine at position 37 in tRNAs that read codons beginning with uridine, leading to the formation of N6-(dimethylallyl)adenosine (i(6)A). This chain is tRNA dimethylallyltransferase, found in Rhizobium leguminosarum bv. trifolii (strain WSM2304).